We begin with the raw amino-acid sequence, 510 residues long: D-allose import ATP-binding protein AlsA (510 aa).

2 consecutive ABC transporter domains span residues 6 to 245 (ISMA…VGRE) and 260 to 509 (LAHE…ALPQ). An ATP-binding site is contributed by 38-45 (GENGAGKS).

This sequence belongs to the ABC transporter superfamily. D-allose importer (TC 3.A.1.2.6) family. As to quaternary structure, the complex is composed of two ATP-binding proteins (AlsA), two transmembrane proteins (AlsC) and a solute-binding protein (AlsB).

It localises to the cell inner membrane. It catalyses the reaction D-allose(out) + ATP + H2O = D-allose(in) + ADP + phosphate + H(+). Functionally, part of the ABC transporter complex AlsBAC involved in D-allose import. Probably responsible for energy coupling to the transport system. This Escherichia coli (strain K12) protein is D-allose import ATP-binding protein AlsA (alsA).